The sequence spans 344 residues: DNA-directed RNA polymerase subunit alpha (344 aa).

Residues 1-246 (MLVEKFLKDF…EFLFPLVDFE (246 aa)) are alpha N-terminal domain (alpha-NTD). The interval 259-344 (ESSNLLDMSI…VLSKNVKISE (86 aa)) is alpha C-terminal domain (alpha-CTD).

This sequence belongs to the RNA polymerase alpha chain family. In terms of assembly, homodimer. The RNAP catalytic core consists of 2 alpha, 1 beta, 1 beta' and 1 omega subunit. When a sigma factor is associated with the core the holoenzyme is formed, which can initiate transcription.

The catalysed reaction is RNA(n) + a ribonucleoside 5'-triphosphate = RNA(n+1) + diphosphate. Its function is as follows. DNA-dependent RNA polymerase catalyzes the transcription of DNA into RNA using the four ribonucleoside triphosphates as substrates. The sequence is that of DNA-directed RNA polymerase subunit alpha from Borreliella burgdorferi (strain ATCC 35210 / DSM 4680 / CIP 102532 / B31) (Borrelia burgdorferi).